The primary structure comprises 302 residues: Spermidine synthase (302 aa).

N-acetylmethionine is present on Met1. The PABS domain maps to Glu18–Lys253. An S-adenosyl 3-(methylsulfanyl)propylamine-binding site is contributed by Gln49. Tyr79 is a binding site for putrescine. S-adenosyl 3-(methylsulfanyl)propylamine contacts are provided by residues Gln80, Asp104, Glu124, Asp155 to Gly156, and Asp173. Catalysis depends on Asp173, which acts as the Proton acceptor. Residues Asp173–Asp176 and Tyr241 each bind putrescine.

Belongs to the spermidine/spermine synthase family. Homodimer or homotetramer.

It catalyses the reaction S-adenosyl 3-(methylsulfanyl)propylamine + putrescine = S-methyl-5'-thioadenosine + spermidine + H(+). The protein operates within amine and polyamine biosynthesis; spermidine biosynthesis; spermidine from putrescine: step 1/1. Its activity is regulated as follows. The activity is thought to be regulated mainly by the availability of decarboxylated S-adenosylmethionine. Functionally, catalyzes the production of spermidine from putrescine and decarboxylated S-adenosylmethionine (dcSAM). Has a strong preference for putrescine as substrate, and has very low activity towards 1,3-diaminopropane. Has extremely low activity towards spermidine. This chain is Spermidine synthase (SRM), found in Homo sapiens (Human).